Reading from the N-terminus, the 160-residue chain is RNA pyrophosphohydrolase (160 aa).

The Nudix hydrolase domain occupies 10 to 154 (PYRPCVGVML…KRDVYVAVLD (145 aa)). Residues 44–65 (GGVEKGEDPRAAALRELWEETG) carry the Nudix box motif.

The protein belongs to the Nudix hydrolase family. RppH subfamily. A divalent metal cation serves as cofactor.

In terms of biological role, accelerates the degradation of transcripts by removing pyrophosphate from the 5'-end of triphosphorylated RNA, leading to a more labile monophosphorylated state that can stimulate subsequent ribonuclease cleavage. In Roseobacter denitrificans (strain ATCC 33942 / OCh 114) (Erythrobacter sp. (strain OCh 114)), this protein is RNA pyrophosphohydrolase.